Reading from the N-terminus, the 453-residue chain is Ribosomal protein uS12 methylthiotransferase RimO (453 aa).

The 116-residue stretch at 5–120 (PKVGFVSLGC…VMQAVHSHLP (116 aa)) folds into the MTTase N-terminal domain. Residues Cys-14, Cys-50, Cys-79, Cys-151, Cys-155, and Cys-158 each coordinate [4Fe-4S] cluster. In terms of domain architecture, Radical SAM core spans 137-382 (LTPRHYAYLK…MEVAEEVSAN (246 aa)). Residues 385 to 453 (QRKVGKTLKV…ADGHDLWGEV (69 aa)) enclose the TRAM domain.

The protein belongs to the methylthiotransferase family. RimO subfamily. Requires [4Fe-4S] cluster as cofactor.

Its subcellular location is the cytoplasm. It carries out the reaction L-aspartate(89)-[ribosomal protein uS12]-hydrogen + (sulfur carrier)-SH + AH2 + 2 S-adenosyl-L-methionine = 3-methylsulfanyl-L-aspartate(89)-[ribosomal protein uS12]-hydrogen + (sulfur carrier)-H + 5'-deoxyadenosine + L-methionine + A + S-adenosyl-L-homocysteine + 2 H(+). Catalyzes the methylthiolation of an aspartic acid residue of ribosomal protein uS12. This Burkholderia cenocepacia (strain HI2424) protein is Ribosomal protein uS12 methylthiotransferase RimO.